Consider the following 204-residue polypeptide: LexA repressor (204 aa).

The segment at residues 27-47 (VREIGEAVGLASSSTVHGHLA) is a DNA-binding region (H-T-H motif). Active-site for autocatalytic cleavage activity residues include serine 126 and lysine 164.

This sequence belongs to the peptidase S24 family. As to quaternary structure, homodimer.

It carries out the reaction Hydrolysis of Ala-|-Gly bond in repressor LexA.. Its function is as follows. Represses a number of genes involved in the response to DNA damage (SOS response), including recA and lexA. In the presence of single-stranded DNA, RecA interacts with LexA causing an autocatalytic cleavage which disrupts the DNA-binding part of LexA, leading to derepression of the SOS regulon and eventually DNA repair. The chain is LexA repressor from Listeria welshimeri serovar 6b (strain ATCC 35897 / DSM 20650 / CCUG 15529 / CIP 8149 / NCTC 11857 / SLCC 5334 / V8).